The chain runs to 186 residues: dCTP deaminase (186 aa).

K107 to R112 is a dCTP binding site. E133 acts as the Proton donor/acceptor in catalysis. The dCTP site is built by Q152, Y166, and Q176.

This sequence belongs to the dCTP deaminase family. As to quaternary structure, homotrimer.

The catalysed reaction is dCTP + H2O + H(+) = dUTP + NH4(+). Its pathway is pyrimidine metabolism; dUMP biosynthesis; dUMP from dCTP (dUTP route): step 1/2. In terms of biological role, catalyzes the deamination of dCTP to dUTP. The chain is dCTP deaminase from Campylobacter jejuni subsp. jejuni serotype O:6 (strain 81116 / NCTC 11828).